A 420-amino-acid polypeptide reads, in one-letter code: S-adenosylmethionine synthase (420 aa).

His-16 contributes to the ATP binding site. Asp-18 provides a ligand contact to Mg(2+). Position 44 (Glu-44) interacts with K(+). Positions 57 and 100 each coordinate L-methionine. Residues 100 to 110 (QSPDIAQGVNT) form a flexible loop region. Residues 175–177 (DGK), 251–252 (KF), Asp-260, 266–267 (RK), Ala-283, and Lys-287 contribute to the ATP site. Position 260 (Asp-260) interacts with L-methionine. Lys-291 lines the L-methionine pocket.

It belongs to the AdoMet synthase family. As to quaternary structure, homotetramer; dimer of dimers. Mg(2+) is required as a cofactor. Requires K(+) as cofactor.

The protein localises to the cytoplasm. It carries out the reaction L-methionine + ATP + H2O = S-adenosyl-L-methionine + phosphate + diphosphate. The protein operates within amino-acid biosynthesis; S-adenosyl-L-methionine biosynthesis; S-adenosyl-L-methionine from L-methionine: step 1/1. Catalyzes the formation of S-adenosylmethionine (AdoMet) from methionine and ATP. The overall synthetic reaction is composed of two sequential steps, AdoMet formation and the subsequent tripolyphosphate hydrolysis which occurs prior to release of AdoMet from the enzyme. In Trichormus variabilis (strain ATCC 29413 / PCC 7937) (Anabaena variabilis), this protein is S-adenosylmethionine synthase.